Here is a 321-residue protein sequence, read N- to C-terminus: Lipoyl synthase (321 aa).

The [4Fe-4S] cluster site is built by Cys68, Cys73, Cys79, Cys94, Cys98, Cys101, and Ser308. One can recognise a Radical SAM core domain in the interval 80 to 297 (FNHGTATFMI…KALADELGFT (218 aa)).

Belongs to the radical SAM superfamily. Lipoyl synthase family. The cofactor is [4Fe-4S] cluster.

The protein localises to the cytoplasm. It catalyses the reaction [[Fe-S] cluster scaffold protein carrying a second [4Fe-4S](2+) cluster] + N(6)-octanoyl-L-lysyl-[protein] + 2 oxidized [2Fe-2S]-[ferredoxin] + 2 S-adenosyl-L-methionine + 4 H(+) = [[Fe-S] cluster scaffold protein] + N(6)-[(R)-dihydrolipoyl]-L-lysyl-[protein] + 4 Fe(3+) + 2 hydrogen sulfide + 2 5'-deoxyadenosine + 2 L-methionine + 2 reduced [2Fe-2S]-[ferredoxin]. Its pathway is protein modification; protein lipoylation via endogenous pathway; protein N(6)-(lipoyl)lysine from octanoyl-[acyl-carrier-protein]: step 2/2. Functionally, catalyzes the radical-mediated insertion of two sulfur atoms into the C-6 and C-8 positions of the octanoyl moiety bound to the lipoyl domains of lipoate-dependent enzymes, thereby converting the octanoylated domains into lipoylated derivatives. The protein is Lipoyl synthase of Shewanella putrefaciens (strain CN-32 / ATCC BAA-453).